A 466-amino-acid chain; its full sequence is GTPase Der (466 aa).

EngA-type G domains follow at residues 30-193 (PVVA…PEVS) and 203-376 (RRVA…ASWD). Residues 36–43 (GRPNVGKS), 83–87 (DTGGW), 145–148 (NKVD), 209–216 (GKPNVGKS), 256–260 (DTAGL), and 321–324 (NKWD) each bind GTP. Residues 377 to 459 (TRIATGPLNS…PIRINVRVRE (83 aa)) form the KH-like domain.

This sequence belongs to the TRAFAC class TrmE-Era-EngA-EngB-Septin-like GTPase superfamily. EngA (Der) GTPase family. As to quaternary structure, associates with the 50S ribosomal subunit.

Its function is as follows. GTPase that plays an essential role in the late steps of ribosome biogenesis. The chain is GTPase Der from Mycolicibacterium paratuberculosis (strain ATCC BAA-968 / K-10) (Mycobacterium paratuberculosis).